The chain runs to 682 residues: Protein ACTIVITY OF BC1 COMPLEX KINASE 1, chloroplastic (682 aa).

A chloroplast-targeting transit peptide spans 1–79 (MESIHCNSLL…NSTDASVMTT (79 aa)). Residues 236-567 (KISSQTIAAA…IQVLFKDGVF (332 aa)) form the Protein kinase domain. Residues 242–250 (IAAASLGQV) and lysine 265 each bind ATP. Aspartate 400 (proton acceptor) is an active-site residue.

This sequence belongs to the protein kinase superfamily. ADCK protein kinase family. As to quaternary structure, interacts with ABC1K3 in plastoglobules (PG). Expressed in all tissues (e.g. especially in leaves) at all developmental stages from seed germination to flowering, except in the root tips.

It is found in the plastid. It localises to the chloroplast. Its subcellular location is the plastoglobule. The catalysed reaction is L-seryl-[protein] + ATP = O-phospho-L-seryl-[protein] + ADP + H(+). It catalyses the reaction L-threonyl-[protein] + ATP = O-phospho-L-threonyl-[protein] + ADP + H(+). Kinase that can phosphorylate the tocopherol cyclase VTE1, a key enzyme of tocopherol (vitamin E) metabolism and involved in the recycling of oxidated alpha-tocopherol quinone, possibly stabilizing it at plastoglobules. Also regulates plastoglobule protein composition. Prevents photodamage of chloroplasts under continuous red light, thus working in opposition to ABC1K3. Together with ABC1K1, contributes to plastoglobule (PG) function in prenyl-lipid metabolism, stress response, and thylakoid remodeling. Involved in chlorophyll degradation and in the maintenance of the number of chlorophyll-binding photosynthetic thylakoid membranes. Ensures photosynthetic electron transport by regulating the homeostasis of plastoquinone, beta-carotene and xanthophyll lutein, as well as membrane antioxidant tocopherol metabolism. Seems to affect specifically stability or turnover of D1 protein, product of psbA, one of the four core subunits of the photosystem II (PSII). Required for photooxidative stress responses, including the induction of oxidative stress response genes (e.g. FSD1, CSD1, CAT1, and UTG71C1), to prevent photosystem II core and chlorophyll degradations. The sequence is that of Protein ACTIVITY OF BC1 COMPLEX KINASE 1, chloroplastic from Arabidopsis thaliana (Mouse-ear cress).